The sequence spans 170 residues: Bifunctional protein PyrR (170 aa).

Positions 90-102 (LVLIDDVLMSGRT) match the PRPP-binding motif.

It belongs to the purine/pyrimidine phosphoribosyltransferase family. PyrR subfamily.

It catalyses the reaction UMP + diphosphate = 5-phospho-alpha-D-ribose 1-diphosphate + uracil. Regulates the transcription of the pyrimidine nucleotide (pyr) operon in response to exogenous pyrimidines. Its function is as follows. Also displays a weak uracil phosphoribosyltransferase activity which is not physiologically significant. This is Bifunctional protein PyrR from Pseudomonas savastanoi pv. phaseolicola (strain 1448A / Race 6) (Pseudomonas syringae pv. phaseolicola (strain 1448A / Race 6)).